The primary structure comprises 125 residues: MLLLKNCLTIFFKNKNYVSWRFLEVNDRETWAEDYALDLDKYALEAYWLEAKEVKQDDASVLSCFVFKYQGWFFFFIYYYLFKTQAELDAEAKIDEELSDDEGNIDEDLEDFQNEAKVSTSLELF.

The protein resides in the mitochondrion. This is an uncharacterized protein from Paramecium tetraurelia.